The primary structure comprises 743 residues: Protein STB5 (743 aa).

The zn(2)-C6 fungal-type DNA-binding region spans 22 to 49 (CARCRKLKKKCGKQIPTCANCDKNGAHC). Disordered stretches follow at residues 81-100 (VGKS…PLSA) and 155-249 (NSNP…YANN). Composition is skewed to polar residues over residues 85–99 (PLST…SPLS) and 155–198 (NSNP…SPLI). A compositionally biased stretch (low complexity) spans 213-238 (NNNRNTSNGDNGSNVNHDNNNGSTNT). Over residues 239–249 (PQLSLTPYANN) the composition is skewed to polar residues.

It is found in the nucleus. Its function is as follows. Binds to SIN3. The sequence is that of Protein STB5 (STB5) from Saccharomyces cerevisiae (strain ATCC 204508 / S288c) (Baker's yeast).